A 612-amino-acid chain; its full sequence is Elongation factor 4 (612 aa).

Residues 11–193 (KHIRNFSIVA…EIVKKVPAPD (183 aa)) form the tr-type G domain. GTP is bound by residues 23 to 28 (DHGKST) and 140 to 143 (NKID).

The protein belongs to the TRAFAC class translation factor GTPase superfamily. Classic translation factor GTPase family. LepA subfamily.

The protein localises to the cell membrane. The catalysed reaction is GTP + H2O = GDP + phosphate + H(+). Functionally, required for accurate and efficient protein synthesis under certain stress conditions. May act as a fidelity factor of the translation reaction, by catalyzing a one-codon backward translocation of tRNAs on improperly translocated ribosomes. Back-translocation proceeds from a post-translocation (POST) complex to a pre-translocation (PRE) complex, thus giving elongation factor G a second chance to translocate the tRNAs correctly. Binds to ribosomes in a GTP-dependent manner. This chain is Elongation factor 4, found in Lactobacillus johnsonii (strain CNCM I-12250 / La1 / NCC 533).